The chain runs to 97 residues: Spermatogenesis-associated protein 45 (97 aa).

Belongs to the SPATA45 family.

The polypeptide is Spermatogenesis-associated protein 45 (Spata45) (Mus musculus (Mouse)).